We begin with the raw amino-acid sequence, 195 residues long: Coagulogen (195 aa).

Positions 1–20 (MEKKLLGIAILFVTVVSVLA) are cleaved as a signal peptide. Intrachain disulfides connect Cys28/Cys188, Cys30/Cys115, Cys80/Cys182, Cys85/Cys141, Cys95/Cys189, Cys108/Cys161, Cys147/Cys191, and Cys155/Cys193.

Belongs to the coagulin family. In terms of assembly, coagulogen is cleaved after Arg-38 and Arg-66 by a clotting enzyme contained in the hemocyte and activated by a bacterial endotoxin (lipopolysaccharide). This cleavage releases the peptide C and leaves 2 chains of coagulin, A and B, linked by two disulfide bonds. Coagulin molecules interlink to form a gel. In terms of tissue distribution, hemolymph.

It localises to the secreted. In terms of biological role, coagulogen is a gel-forming protein of hemolymph; it hinders the spread of invaders by immobilizing them. The chain is Coagulogen from Limulus polyphemus (Atlantic horseshoe crab).